The following is an 87-amino-acid chain: Cell division topological specificity factor (87 aa).

This sequence belongs to the MinE family.

Prevents the cell division inhibition by proteins MinC and MinD at internal division sites while permitting inhibition at polar sites. This ensures cell division at the proper site by restricting the formation of a division septum at the midpoint of the long axis of the cell. The chain is Cell division topological specificity factor from Clostridium botulinum (strain ATCC 19397 / Type A).